A 529-amino-acid polypeptide reads, in one-letter code: AT hook-containing protein attf-4 (529 aa).

4 disordered regions span residues 1 to 39, 131 to 158, 173 to 200, and 233 to 255; these read MLQP…MEDD, QVVH…KPIE, GGGG…FPPP, and VSAN…DHLE. Composition is skewed to polar residues over residues 19-31 and 138-153; these read SVST…SPSN and QNGS…TSEN. Basic and acidic residues predominate over residues 179–189; the sequence is IHTERLSEPAR. Residues 233-248 show a composition bias toward low complexity; it reads VSANTSTASPGPSSEG. Residues 307-319 constitute a DNA-binding region (a.T hook); the sequence is GRGRGRPKLIGDE. The disordered stretch occupies residues 436–476; sequence LEGGSPPASSSSTATTSTATKTVKQESKNGHQNEENLNVKQ. Residues 443-455 show a composition bias toward low complexity; it reads ASSSSTATTSTAT. Positions 458–469 are enriched in basic and acidic residues; the sequence is VKQESKNGHQNE.

This is AT hook-containing protein attf-4 from Caenorhabditis elegans.